Reading from the N-terminus, the 210-residue chain is ATP phosphoribosyltransferase (210 aa).

Belongs to the ATP phosphoribosyltransferase family. Short subfamily. Heteromultimer composed of HisG and HisZ subunits.

It is found in the cytoplasm. It carries out the reaction 1-(5-phospho-beta-D-ribosyl)-ATP + diphosphate = 5-phospho-alpha-D-ribose 1-diphosphate + ATP. The protein operates within amino-acid biosynthesis; L-histidine biosynthesis; L-histidine from 5-phospho-alpha-D-ribose 1-diphosphate: step 1/9. Catalyzes the condensation of ATP and 5-phosphoribose 1-diphosphate to form N'-(5'-phosphoribosyl)-ATP (PR-ATP). Has a crucial role in the pathway because the rate of histidine biosynthesis seems to be controlled primarily by regulation of HisG enzymatic activity. This is ATP phosphoribosyltransferase from Bacillus cytotoxicus (strain DSM 22905 / CIP 110041 / 391-98 / NVH 391-98).